Consider the following 338-residue polypeptide: Homeobox protein ceh-20 (338 aa).

In terms of domain architecture, PBC spans 4-187 (THPANLSELL…VMILRSRFLD (184 aa)). The interval 11 to 91 (ELLDAVLKIN…EGVAGPDKGG (81 aa)) is PBC-A. The segment at 94-187 (GSDASGGDQA…VMILRSRFLD (94 aa)) is PBC-B. The homeobox; TALE-type DNA-binding region spans 188–250 (ARRKRRNFSK…NKRIRYKKNM (63 aa)).

The protein belongs to the TALE/PBX homeobox family. As to quaternary structure, interacts with Meis protein psa-3. Interacts with homeobox protein nob-1. In terms of tissue distribution, expressed in head dopaminergic neurons.

It is found in the nucleus. Its function is as follows. Transcription factor that binds to the 5'-TGATNNAT(G/T)(G/A)-3' PBC/Hox lineage enhancer region of sem-2 to promote cell fate specification in the postembryonic mesoderm (also known as the M lineage). Required for the M lineage-specific expression of the transcription factor, mls-2. Required for asymmetric division of the T hypodermal cell, probably acting via the regulation of asymmetric expression of Meis protein psa-3 in concert with homeobox protein nob-1 and the Wnt-MAPK pathway. Has a role in the mig-13 pathway to promote the guidance, migration and positioning of Q neuroblasts and their descendants along the anteroposterior body axis and the anterior migration of BDU interneurons. Also required for normal vulval formation. Plays a role in regulating gene expression in dopaminergic neurons, acting in midbody PDE neurons, and acting redundantly with ceh-40 in head neurons. May activate dopamine pathway genes in concert with ETS domain-containing protein ast-1, and homeobox proteins ceh-43 and ceh-40. The chain is Homeobox protein ceh-20 from Caenorhabditis elegans.